We begin with the raw amino-acid sequence, 278 residues long: Undecaprenyl-diphosphatase 1 (278 aa).

7 consecutive transmembrane segments (helical) span residues 46–66 (VVGFTAVIQVGAIAAVLVYFF), 91–111 (YTFTWWVIYATIPVVLVGLAA), 119–139 (LASLWVVAASLLAGSALMWFA), 153–173 (SLPDAMIVGTSQILALLFPGF), 191–211 (VAATRLSFFLSIPALTGAGLY), 225–245 (PLAVGTVVSFFVAYASIAWLL), and 256–276 (FIIYRVAVAVLLAGLLAGGAI).

Belongs to the UppP family.

Its subcellular location is the cell membrane. The enzyme catalyses di-trans,octa-cis-undecaprenyl diphosphate + H2O = di-trans,octa-cis-undecaprenyl phosphate + phosphate + H(+). Catalyzes the dephosphorylation of undecaprenyl diphosphate (UPP). Confers resistance to bacitracin. In Frankia alni (strain DSM 45986 / CECT 9034 / ACN14a), this protein is Undecaprenyl-diphosphatase 1.